The chain runs to 133 residues: Ribosome-binding factor A (133 aa).

It belongs to the RbfA family. In terms of assembly, monomer. Binds 30S ribosomal subunits, but not 50S ribosomal subunits or 70S ribosomes.

The protein resides in the cytoplasm. In terms of biological role, one of several proteins that assist in the late maturation steps of the functional core of the 30S ribosomal subunit. Associates with free 30S ribosomal subunits (but not with 30S subunits that are part of 70S ribosomes or polysomes). Required for efficient processing of 16S rRNA. May interact with the 5'-terminal helix region of 16S rRNA. This Bordetella bronchiseptica (strain ATCC BAA-588 / NCTC 13252 / RB50) (Alcaligenes bronchisepticus) protein is Ribosome-binding factor A.